Reading from the N-terminus, the 393-residue chain is Putative 8-amino-7-oxononanoate synthase (393 aa).

Residue Arg23 coordinates substrate. 110–111 contacts pyridoxal 5'-phosphate; sequence GY. His135 lines the substrate pocket. Pyridoxal 5'-phosphate is bound by residues Ser183, 208–211, and 239–242; these read DEAH and TLSK. Lys242 is modified (N6-(pyridoxal phosphate)lysine). Position 362 (Thr362) interacts with substrate.

Belongs to the class-II pyridoxal-phosphate-dependent aminotransferase family. BioF subfamily. As to quaternary structure, homodimer. Requires pyridoxal 5'-phosphate as cofactor.

It carries out the reaction 6-carboxyhexanoyl-[ACP] + L-alanine + H(+) = (8S)-8-amino-7-oxononanoate + holo-[ACP] + CO2. It participates in cofactor biosynthesis; biotin biosynthesis. Its function is as follows. Catalyzes the decarboxylative condensation of pimeloyl-[acyl-carrier protein] and L-alanine to produce 8-amino-7-oxononanoate (AON), [acyl-carrier protein], and carbon dioxide. This chain is Putative 8-amino-7-oxononanoate synthase (bioF), found in Trichodesmium erythraeum (strain IMS101).